Here is a 508-residue protein sequence, read N- to C-terminus: Photosystem II CP47 reaction center protein (508 aa).

The next 6 membrane-spanning stretches (helical) occupy residues 21 to 36 (SVHI…WAGS), 101 to 115 (IVFS…IWHW), 140 to 156 (GIHL…FGAF), 203 to 218 (IAAG…FHLS), 237 to 252 (VLSS…AFVV), and 457 to 472 (SFAL…HGAR).

The protein belongs to the PsbB/PsbC family. PsbB subfamily. In terms of assembly, PSII is composed of 1 copy each of membrane proteins PsbA, PsbB, PsbC, PsbD, PsbE, PsbF, PsbH, PsbI, PsbJ, PsbK, PsbL, PsbM, PsbT, PsbX, PsbY, PsbZ, Psb30/Ycf12, at least 3 peripheral proteins of the oxygen-evolving complex and a large number of cofactors. It forms dimeric complexes. Requires Binds multiple chlorophylls. PSII binds additional chlorophylls, carotenoids and specific lipids. as cofactor.

It is found in the plastid. Its subcellular location is the chloroplast thylakoid membrane. In terms of biological role, one of the components of the core complex of photosystem II (PSII). It binds chlorophyll and helps catalyze the primary light-induced photochemical processes of PSII. PSII is a light-driven water:plastoquinone oxidoreductase, using light energy to abstract electrons from H(2)O, generating O(2) and a proton gradient subsequently used for ATP formation. This is Photosystem II CP47 reaction center protein from Dioscorea elephantipes (Elephant's foot yam).